A 137-amino-acid chain; its full sequence is Ribosome-binding factor A (137 aa).

Positions lysine 112–proline 137 are disordered. Residues threonine 127 to proline 137 show a composition bias toward basic and acidic residues.

This sequence belongs to the RbfA family. As to quaternary structure, monomer. Binds 30S ribosomal subunits, but not 50S ribosomal subunits or 70S ribosomes.

It localises to the cytoplasm. In terms of biological role, one of several proteins that assist in the late maturation steps of the functional core of the 30S ribosomal subunit. Associates with free 30S ribosomal subunits (but not with 30S subunits that are part of 70S ribosomes or polysomes). Required for efficient processing of 16S rRNA. May interact with the 5'-terminal helix region of 16S rRNA. This chain is Ribosome-binding factor A, found in Coprothermobacter proteolyticus (strain ATCC 35245 / DSM 5265 / OCM 4 / BT).